The sequence spans 1379 residues: DNA-directed RNA polymerase subunit beta (1379 aa).

Belongs to the RNA polymerase beta chain family. The RNAP catalytic core consists of 2 alpha, 1 beta, 1 beta' and 1 omega subunit. When a sigma factor is associated with the core the holoenzyme is formed, which can initiate transcription.

It catalyses the reaction RNA(n) + a ribonucleoside 5'-triphosphate = RNA(n+1) + diphosphate. In terms of biological role, DNA-dependent RNA polymerase catalyzes the transcription of DNA into RNA using the four ribonucleoside triphosphates as substrates. This is DNA-directed RNA polymerase subunit beta from Rhizobium etli (strain ATCC 51251 / DSM 11541 / JCM 21823 / NBRC 15573 / CFN 42).